Reading from the N-terminus, the 744-residue chain is Endonuclease MutS2 (744 aa).

Residue 315–322 coordinates ATP; that stretch reads GPNMGGKT. Residues 668-743 form the Smr domain; that stretch reads VDLRGLTVAE…GHGVTVVALR (76 aa).

It belongs to the DNA mismatch repair MutS family. MutS2 subfamily. As to quaternary structure, homodimer. Interacts with MutL. Binds to stalled ribosomes, contacting rRNA.

With respect to regulation, nuclease activity is stimulated by interaction with MutL. ATPase activity is stimulated by dsDNA. Its function is as follows. Endonuclease that is involved in the suppression of homologous recombination and may thus have a key role in the control of bacterial genetic diversity. Cleaves the phosphate backbone of oligodeoxynucleotides non-sequence-specifically at the 3' side of the phosphates. Preferably incises the branched DNA structures, especially the D-loop structure over the Holliday junction. Has ATPase activity. Binds to dsDNA but not to ssDNA. Functionally, acts as a ribosome collision sensor, splitting the ribosome into its 2 subunits. Detects stalled/collided 70S ribosomes which it binds and splits by an ATP-hydrolysis driven conformational change. Acts upstream of the ribosome quality control system (RQC), a ribosome-associated complex that mediates the extraction of incompletely synthesized nascent chains from stalled ribosomes and their subsequent degradation. Probably generates substrates for RQC. In Thermus thermophilus (strain ATCC 27634 / DSM 579 / HB8), this protein is Endonuclease MutS2.